The sequence spans 262 residues: Putative 1-acyl-sn-glycerol-3-phosphate acyltransferase acl-1 (262 aa).

Helical transmembrane passes span 3-23 (FLAI…PVIG), 29-49 (VYFG…SIPF), and 89-109 (IIIA…AWPV). An HXXXXD motif motif is present at residues 94-99 (HQSALD).

This sequence belongs to the 1-acyl-sn-glycerol-3-phosphate acyltransferase family.

It localises to the membrane. It catalyses the reaction a 1-acyl-sn-glycero-3-phosphate + an acyl-CoA = a 1,2-diacyl-sn-glycero-3-phosphate + CoA. It participates in phospholipid metabolism; CDP-diacylglycerol biosynthesis; CDP-diacylglycerol from sn-glycerol 3-phosphate: step 2/3. In terms of biological role, converts lysophosphatidic acid (LPA) into phosphatidic acid by incorporating an acyl moiety at the sn-2 position of the glycerol backbone. The polypeptide is Putative 1-acyl-sn-glycerol-3-phosphate acyltransferase acl-1 (acl-1) (Caenorhabditis elegans).